The following is a 348-amino-acid chain: Adenosine deaminase (348 aa).

Zn(2+) is bound by residues H16 and H18. Positions 18, 20, and 174 each coordinate substrate. H201 contacts Zn(2+). E204 functions as the Proton donor in the catalytic mechanism. Residue D282 participates in Zn(2+) binding.

The protein belongs to the metallo-dependent hydrolases superfamily. Adenosine and AMP deaminases family. Adenosine deaminase subfamily. It depends on Zn(2+) as a cofactor.

It catalyses the reaction adenosine + H2O + H(+) = inosine + NH4(+). It carries out the reaction 2'-deoxyadenosine + H2O + H(+) = 2'-deoxyinosine + NH4(+). In terms of biological role, catalyzes the hydrolytic deamination of adenosine and 2-deoxyadenosine. This Clostridium kluyveri (strain ATCC 8527 / DSM 555 / NBRC 12016 / NCIMB 10680 / K1) protein is Adenosine deaminase.